The chain runs to 205 residues: Probable thymidylate kinase (205 aa).

10–17 lines the ATP pocket; sequence GIDGSGKT.

Belongs to the thymidylate kinase family.

The enzyme catalyses dTMP + ATP = dTDP + ADP. The protein is Probable thymidylate kinase (tmk) of Pyrococcus horikoshii (strain ATCC 700860 / DSM 12428 / JCM 9974 / NBRC 100139 / OT-3).